A 477-amino-acid chain; its full sequence is AAA-ATPase At3g28600 (477 aa).

Positions 1–26 are cleaved as a signal peptide; it reads MMMGNTFGSSLASLFFLWATIQQIFP. Residue 245 to 252 participates in ATP binding; the sequence is GPPGTGKS.

It belongs to the AAA ATPase family. BCS1 subfamily. It depends on Mg(2+) as a cofactor.

It carries out the reaction ATP + H2O = ADP + phosphate + H(+). This chain is AAA-ATPase At3g28600, found in Arabidopsis thaliana (Mouse-ear cress).